The sequence spans 108 residues: uncharacterized protein (108 aa).

Residues 15 to 37 (SYYFYIFWNFFLPMFIVYRGFGL) traverse the membrane as a helical segment.

The protein localises to the membrane. This is an uncharacterized protein from Archaeoglobus fulgidus (strain ATCC 49558 / DSM 4304 / JCM 9628 / NBRC 100126 / VC-16).